The chain runs to 112 residues: S-adenosylmethionine decarboxylase proenzyme (112 aa).

Ser62 functions as the Schiff-base intermediate with substrate; via pyruvic acid in the catalytic mechanism. At Ser62 the chain carries Pyruvic acid (Ser); by autocatalysis. Catalysis depends on His67, which acts as the Proton acceptor; for processing activity. Cys82 serves as the catalytic Proton donor; for catalytic activity.

It belongs to the prokaryotic AdoMetDC family. Type 1 subfamily. As to quaternary structure, heterotetramer of two alpha and two beta chains arranged as a dimer of alpha/beta heterodimers. Pyruvate serves as cofactor. Is synthesized initially as an inactive proenzyme. Formation of the active enzyme involves a self-maturation process in which the active site pyruvoyl group is generated from an internal serine residue via an autocatalytic post-translational modification. Two non-identical subunits are generated from the proenzyme in this reaction, and the pyruvate is formed at the N-terminus of the alpha chain, which is derived from the carboxyl end of the proenzyme. The post-translation cleavage follows an unusual pathway, termed non-hydrolytic serinolysis, in which the side chain hydroxyl group of the serine supplies its oxygen atom to form the C-terminus of the beta chain, while the remainder of the serine residue undergoes an oxidative deamination to produce ammonia and the pyruvoyl group blocking the N-terminus of the alpha chain.

It catalyses the reaction S-adenosyl-L-methionine + H(+) = S-adenosyl 3-(methylsulfanyl)propylamine + CO2. The protein operates within amine and polyamine biosynthesis; S-adenosylmethioninamine biosynthesis; S-adenosylmethioninamine from S-adenosyl-L-methionine: step 1/1. Its function is as follows. Catalyzes the decarboxylation of S-adenosylmethionine to S-adenosylmethioninamine (dcAdoMet), the propylamine donor required for the synthesis of the polyamines spermine and spermidine from the diamine putrescine. In Archaeoglobus fulgidus (strain ATCC 49558 / DSM 4304 / JCM 9628 / NBRC 100126 / VC-16), this protein is S-adenosylmethionine decarboxylase proenzyme.